Reading from the N-terminus, the 319-residue chain is Ribonucleoside-diphosphate reductase small chain (319 aa).

Fe cation is bound by residues Asp70, Glu101, and His104. Residue Tyr108 is part of the active site. Fe cation is bound by residues Glu163, Glu197, and His200. Positions 313-319 (FSLDVDF) are interaction with R1.

The protein belongs to the ribonucleoside diphosphate reductase small chain family. In terms of assembly, interacts with RNR1/OPG080 subunit. Can interact with host RNR1 supunit. Requires Fe cation as cofactor.

It carries out the reaction a 2'-deoxyribonucleoside 5'-diphosphate + [thioredoxin]-disulfide + H2O = a ribonucleoside 5'-diphosphate + [thioredoxin]-dithiol. Its function is as follows. Ribonucleoside-diphosphate reductase holoenzyme provides the precursors necessary for viral DNA synthesis. Allows virus growth in non-dividing cells. Catalyzes the biosynthesis of deoxyribonucleotides from the corresponding ribonucleotides. In Bos taurus (Bovine), this protein is Ribonucleoside-diphosphate reductase small chain (OPG048).